The primary structure comprises 1299 residues: Nuclear factor related to kappa-B-binding protein (1299 aa).

The DEUBAD domain maps to 39 to 156 (PEDLLEDPEI…LKQILASRSD (118 aa)). Disordered regions lie at residues 163–187 (RSGP…REWR) and 204–232 (GDTA…PAVP). Over residues 216–232 (SSWLPSSPARSPSPAVP) the composition is skewed to low complexity. Serine 228 and serine 298 each carry phosphoserine. Lysine 327 participates in a covalent cross-link: Glycyl lysine isopeptide (Lys-Gly) (interchain with G-Cter in SUMO2). At serine 351 the chain carries Phosphoserine. Residues 370–495 (LGINEISSSF…FCKQENEDSS (126 aa)) are winged-helix like domain. Lysine 469 participates in a covalent cross-link: Glycyl lysine isopeptide (Lys-Gly) (interchain with G-Cter in SUMO2). Residue lysine 488 forms a Glycyl lysine isopeptide (Lys-Gly) (interchain with G-Cter in SUMO1); alternate linkage. Lysine 488 is covalently cross-linked (Glycyl lysine isopeptide (Lys-Gly) (interchain with G-Cter in SUMO2); alternate). Disordered stretches follow at residues 669 to 760 (AAKA…SSSG), 882 to 902 (LPAT…TSAP), and 1017 to 1043 (VHAA…TVVK). 3 stretches are compositionally biased toward low complexity: residues 677–688 (QQKPKPPSKVKS), 695–715 (IKVL…DSSM), and 723–733 (VTPTTPALPAI). Over residues 744–760 (NKSGPSTVSEPAKSSSG) the composition is skewed to polar residues. Low complexity-rich tracts occupy residues 892 to 902 (PATSSPGTSAP) and 1019 to 1043 (AADS…TVVK). Position 1022 is a phosphoserine (serine 1022). N6-acetyllysine is present on lysine 1237. Residue serine 1291 is modified to Phosphoserine.

It belongs to the NFRKB family. Component of the chromatin remodeling INO80 complex; specifically part of a complex module associated with the N-terminus of INO80. Interacts with UCHL5; NFRKB competes with ADRM1 for interaction with UCHL5. Expressed in thymus, brain, testes, spleen and liver.

It is found in the nucleus. Functionally, binds to the DNA consensus sequence 5'-GGGGAATCTCC-3'. Putative regulatory component of the chromatin remodeling INO80 complex which is involved in transcriptional regulation, DNA replication and probably DNA repair. Modulates the deubiquitinase activity of UCHL5 in the INO80 complex. In Homo sapiens (Human), this protein is Nuclear factor related to kappa-B-binding protein (NFRKB).